The primary structure comprises 60 residues: Large ribosomal subunit protein bL32 (60 aa).

It belongs to the bacterial ribosomal protein bL32 family.

The chain is Large ribosomal subunit protein bL32 from Pediococcus pentosaceus (strain ATCC 25745 / CCUG 21536 / LMG 10740 / 183-1w).